Consider the following 152-residue polypeptide: Non-specific lipid transfer protein GPI-anchored 8 (152 aa).

Residues 1 to 23 (MNITRILGVVTTVVILYSVQVTA) form the signal peptide. 3 disulfide bridges follow: Cys-42/Cys-56, Cys-57/Cys-98, and Cys-70/Cys-107. Asn-108 carries N-linked (GlcNAc...) asparagine glycosylation. Ser-124 carries the GPI-anchor amidated serine lipid modification. The propeptide at 125-152 (GNSFSTKKNTALAITFFGFSFVFLGMII) is removed in mature form.

It belongs to the plant LTP family.

Its subcellular location is the cell membrane. In terms of biological role, probable lipid transfer protein. This Arabidopsis thaliana (Mouse-ear cress) protein is Non-specific lipid transfer protein GPI-anchored 8.